We begin with the raw amino-acid sequence, 235 residues long: Eukaryotic translation initiation factor 4E-1 (235 aa).

The segment covering 16–25 (VNKHRGVRSD) has biased composition (basic and acidic residues). The disordered stretch occupies residues 16 to 56 (VNKHRGVRSDGEEDEQLEEGEIVGGDADTLSSSSSSRPGTA). Acidic residues predominate over residues 26-36 (GEEDEQLEEGE). EIF4G-binding regions lie at residues 60–63 (HPLE) and 70–106 (FDTP…NNIH). MRNA is bound by residues 78 to 83 (KQVAWG), Lys-110, and 128 to 129 (WE). A disulfide bridge connects residues Cys-133 and Cys-171. An EIF4G-binding region spans residues 154 to 163 (YTLLAMIGEQ). MRNA is bound by residues 178-183 (RARQEK) and 223-227 (KTLDR).

The protein belongs to the eukaryotic initiation factor 4E family. EIF4F is a multi-subunit complex, the composition of which varies with external and internal environmental conditions. It is composed of at least EIF4A, EIF4E and EIF4G. EIF4E is also known to interact with other partners. In higher plants two isoforms of EIF4F have been identified, named isoform EIF4F and isoform EIF(iso)4F. Isoform EIF4F has subunits p220 and p26, whereas isoform EIF(iso)4F has subunits p82 and p28. As to quaternary structure, (Microbial infection) Interacts with potyvirus viral genome-linked protein (VPg); this interaction is possible in susceptible hosts but impaired in resistant plants. In terms of processing, according to the redox status, the Cys-133-Cys-171 disulfide bridge may have a role in regulating protein function by affecting its ability to bind capped mRNA.

It is found in the nucleus. Its subcellular location is the cytoplasm. Component of the protein complex eIF4F, which is involved in the recognition of the mRNA cap, ATP-dependent unwinding of 5'-terminal secondary structure and recruitment of mRNA to the ribosome. Recognizes and binds the 7-methylguanosine-containing mRNA cap during an early step in the initiation of protein synthesis and facilitates ribosome binding by inducing the unwinding of the mRNAs secondary structures. Key component of recessive resistance to potyviruses. In terms of biological role, (Microbial infection) Susceptibility host factor required for viral infection by recruiting viral RNAs to the host ribosomal complex via an interaction with viral genome-linked protein (VPg). This is Eukaryotic translation initiation factor 4E-1 from Lactuca sativa (Garden lettuce).